The primary structure comprises 145 residues: Anaerobic nitrite reductase NSHB5 (145 aa).

The Globin domain occupies 2-142 (GFSETQEELV…LAAAIKEEMK (141 aa)). The short motif at 35-39 (EIAPA) is the Homodimerization element. Residues Ser45, His59, Lys61, Arg84, Thr88, and His89 each coordinate heme b. The Homodimerization signature appears at 96–108 (DAYFEVVKTALLD).

It belongs to the plant globin family. In terms of assembly, homodimer. Requires heme b as cofactor. As to expression, expressed in embryonic (embryos, coleoptiles and seminal roots) and vegetative (leaves and roots) organs.

Its subcellular location is the cytoplasm. The protein resides in the nucleus. It carries out the reaction Fe(III)-heme b-[protein] + nitric oxide + H2O = Fe(II)-heme b-[protein] + nitrite + 2 H(+). Its function is as follows. Phytoglobin that reduces nitrite to nitric oxide under anoxic conditions (e.g. during flooding or in waterlogged soil). May not function as an oxygen storage or transport protein. Has an unusually high affinity for O(2) through an hexacoordinate heme iron because of a very low dissociation constant. This chain is Anaerobic nitrite reductase NSHB5, found in Oryza sativa subsp. japonica (Rice).